The chain runs to 313 residues: Syndecan-1 (313 aa).

The N-terminal stretch at 1-22 (MRRAALWLWLCALALRLQPALP) is a signal peptide. At 23 to 257 (QIVTANVPPE…GLLDRKEVLG (235 aa)) the chain is on the extracellular side. Disordered stretches follow at residues 27–58 (ANVP…MTLS) and 95–186 (AGEK…VEDG). Positions 32–42 (EDQDGSGDDSD) are enriched in acidic residues. Ser37 carries an O-linked (Xyl...) (chondroitin sulfate) serine glycan. Asn43 carries N-linked (GlcNAc...) asparagine glycosylation. O-linked (Xyl...) (heparan sulfate) serine glycosylation is found at Ser45 and Ser47. Residues 97 to 129 (EKPEEGEPVAHVEAEPDFTARDKEKEATTRPRE) are compositionally biased toward basic and acidic residues. Over residues 135-154 (VTQQASTAARATTAQASVTS) the composition is skewed to low complexity. O-linked (Xyl...) (chondroitin sulfate) serine glycans are attached at residues Ser209 and Ser219. The chain crosses the membrane as a helical span at residues 258 to 278 (GVIAGGLVGLIFAVCLVAFML). Topologically, residues 279 to 313 (YRMKKKDEGSYSLEEPKQANGGAYQKPTKQEEFYA) are cytoplasmic. Residues 286–295 (EGSYSLEEPK) are compositionally biased toward basic and acidic residues. A disordered region spans residues 286–313 (EGSYSLEEPKQANGGAYQKPTKQEEFYA). A Phosphoserine modification is found at Ser288.

Belongs to the syndecan proteoglycan family. As to quaternary structure, interacts with CDCP1. Interacts (via C-terminus) with TIAM1 (via PDZ domain). Interacts with MDK. In terms of processing, shedding is enhanced by a number of factors such as heparanase, thrombin or EGF. Also by stress and wound healing. PMA-mediated shedding is inhibited by TIMP3.

The protein resides in the membrane. Its subcellular location is the secreted. It is found in the extracellular exosome. In terms of biological role, cell surface proteoglycan that contains both heparan sulfate and chondroitin sulfate and that links the cytoskeleton to the interstitial matrix. Regulates exosome biogenesis in concert with SDCBP and PDCD6IP. Able to induce its own expression in dental mesenchymal cells and also in the neighboring dental epithelial cells via an MSX1-mediated pathway. The chain is Syndecan-1 from Rattus norvegicus (Rat).